Consider the following 254-residue polypeptide: Short-chain dehydrogenase/reductase SDRA (254 aa).

Ile-15–Val-39 serves as a coordination point for NADP(+). Ser-146 is a substrate binding site. Catalysis depends on Tyr-159, which acts as the Proton acceptor. The short motif at Ser-252–Leu-254 is the Microbody targeting signal element.

This sequence belongs to the short-chain dehydrogenases/reductases (SDR) family.

It is found in the peroxisome. In terms of biological role, involved with IBR3 and IBR10 in the peroxisomal beta-oxidation of indole-3-butyric acid (IBA) to form indole-3-acetic acid (IAA), a biologically active auxin. May be responsible for catalyzing the dehydrogenation step in the conversion of IBA. May be involved in the peroxisomal activation of 2,4-dichlorophenoxybutyric acid (2,4-DB), a precursor of active auxins that inhibit root growth. This Arabidopsis thaliana (Mouse-ear cress) protein is Short-chain dehydrogenase/reductase SDRA.